A 227-amino-acid polypeptide reads, in one-letter code: E3 ubiquitin-protein ligase ZNRF1 (227 aa).

A disordered region spans residues 1–38; the sequence is MGGKQSTAARSRGPFPGVSTDDSAVPPPGGAPHFGHYR. G2 carries N-myristoyl glycine lipidation. Positions 2-10 are required for endosomal and lysosomal localization and myristoylation; it reads GGKQSTAAR. Residues S50, S52, and S53 each carry the phosphoserine modification. The segment at 77–105 is disordered; the sequence is RGAGDAERAPGSGGSASDSTYAHGNGYQE. Y103 carries the phosphotyrosine modification. Phosphoserine is present on S123. Residues 184–225 form an RING-type; atypical zinc finger; it reads CVICLEELLQGDTIARLPCLCIYHKSCIDSWFEVNRSCPEHP.

As to quaternary structure, interacts with AKT1, GLUL and TUBB2A. Interacts with ZNRF2. Interacts (via its RING domain) with UBE2N. Interacts (when phosphorylated) with YWHAE. In terms of processing, N-myristoylation targets ZNRF1 to intracellular membranes. Post-translationally, phosphorylated by SRC at Tyr-103; leading to 'Lys-63'-linked ubiquitination of TLR3, lysosomal trafficking and degradation.

It localises to the endosome. The protein resides in the lysosome. It is found in the membrane. Its subcellular location is the cytoplasmic vesicle. The protein localises to the secretory vesicle. It localises to the synaptic vesicle membrane. The catalysed reaction is S-ubiquitinyl-[E2 ubiquitin-conjugating enzyme]-L-cysteine + [acceptor protein]-L-lysine = [E2 ubiquitin-conjugating enzyme]-L-cysteine + N(6)-ubiquitinyl-[acceptor protein]-L-lysine.. It participates in protein modification; protein ubiquitination. Its function is as follows. E3 ubiquitin-protein ligase that plays a role in different processes including cell differentiation, receptor recycling or regulation of inflammation. Mediates the ubiquitination of AKT1 and GLUL, thereby playing a role in neuron cells differentiation. Plays a role in the establishment and maintenance of neuronal transmission and plasticity. Regulates Schwann cells differentiation by mediating ubiquitination of GLUL. Promotes neurodegeneration by mediating 'Lys-48'-linked polyubiquitination and subsequent degradation of AKT1 in axons: degradation of AKT1 prevents AKT1-mediated phosphorylation of GSK3B, leading to GSK3B activation and phosphorylation of DPYSL2/CRMP2 followed by destabilization of microtubule assembly in axons. Ubiquitinates the Na(+)/K(+) ATPase alpha-1 subunit/ATP1A1 and thereby influences its endocytosis and/or degradation. Controls ligand-induced EGFR signaling via mediating receptor ubiquitination and recruitment of the ESCRT machinery. Acts as a negative feedback mechanism controlling TLR3 trafficking by mediating TLR3 'Lys-63'-linked polyubiquitination to reduce type I IFN production. Modulates inflammation by promoting caveolin-1/CAV1 ubiquitination and degradation to regulate TLR4-activated immune response. The sequence is that of E3 ubiquitin-protein ligase ZNRF1 (ZNRF1) from Bos taurus (Bovine).